The chain runs to 223 residues: Deoxyribose-phosphate aldolase (223 aa).

The Proton donor/acceptor role is filled by Asp-91. The active-site Schiff-base intermediate with acetaldehyde is Lys-153. Lys-182 functions as the Proton donor/acceptor in the catalytic mechanism.

The protein belongs to the DeoC/FbaB aldolase family. DeoC type 1 subfamily.

The protein localises to the cytoplasm. It carries out the reaction 2-deoxy-D-ribose 5-phosphate = D-glyceraldehyde 3-phosphate + acetaldehyde. The protein operates within carbohydrate degradation; 2-deoxy-D-ribose 1-phosphate degradation; D-glyceraldehyde 3-phosphate and acetaldehyde from 2-deoxy-alpha-D-ribose 1-phosphate: step 2/2. Catalyzes a reversible aldol reaction between acetaldehyde and D-glyceraldehyde 3-phosphate to generate 2-deoxy-D-ribose 5-phosphate. This Streptococcus pyogenes serotype M1 protein is Deoxyribose-phosphate aldolase.